The primary structure comprises 105 residues: U2-lycotoxin-Ls1d (105 aa).

The signal sequence occupies residues 1 to 17 (MIKYVLISALLVVAVYS). A propeptide spanning residues 18–41 (FTIEDNEDALLEEAEDELDTEEER) is cleaved from the precursor. Cystine bridges form between Cys51/Cys67, Cys58/Cys97, Cys60/Cys83, and Cys69/Cys81.

It belongs to the neurotoxin 04 (omega-agtx) family. 01 (type I omega-agtx) subfamily. As to expression, expressed by the venom gland.

The protein localises to the secreted. Its function is as follows. Insecticidal to house crickets. It induces an excitatory slow-onset impact that leads to irreversible spastic paralysis. It also modifies human voltage-gated potassium channel Kv1.5/KCNA5. Most likely, it binds to the voltage-sensing domain of the channel, suggesting it does not block the pore but prevents its opening at physiological membrane potentials. The recombinant peptide binds to the channel in an irreversible manner and slows down the hKv1.5 current activation kinetics. It is not toxic to mice, when intracranially injected (at 0.5 ug/g mouse). The sequence is that of U2-lycotoxin-Ls1d from Lycosa singoriensis (Wolf spider).